The following is a 184-amino-acid chain: Dirigent protein 14 (184 aa).

A signal peptide spans 1–20 (MANQIYLFSLICLSVLLCQS). A disulfide bridge connects residues Cys36 and Cys182. 2 N-linked (GlcNAc...) asparagine glycosylation sites follow: Asn55 and Asn119.

Belongs to the plant dirigent protein family. As to quaternary structure, homodimer.

It localises to the secreted. Its subcellular location is the extracellular space. The protein localises to the apoplast. Dirigent proteins impart stereoselectivity on the phenoxy radical-coupling reaction, yielding optically active lignans from two molecules of coniferyl alcohol in the biosynthesis of lignans, flavonolignans, and alkaloids and thus plays a central role in plant secondary metabolism. The chain is Dirigent protein 14 (DIR14) from Arabidopsis thaliana (Mouse-ear cress).